The primary structure comprises 208 residues: Uracil phosphoribosyltransferase (208 aa).

5-phospho-alpha-D-ribose 1-diphosphate is bound by residues Arg-78, Arg-103, and 130–138 (DPMLATGGT). Residues Ile-193 and 198 to 200 (GDA) each bind uracil. Residue Asp-199 coordinates 5-phospho-alpha-D-ribose 1-diphosphate.

This sequence belongs to the UPRTase family. Requires Mg(2+) as cofactor.

It carries out the reaction UMP + diphosphate = 5-phospho-alpha-D-ribose 1-diphosphate + uracil. It participates in pyrimidine metabolism; UMP biosynthesis via salvage pathway; UMP from uracil: step 1/1. With respect to regulation, allosterically activated by GTP. Functionally, catalyzes the conversion of uracil and 5-phospho-alpha-D-ribose 1-diphosphate (PRPP) to UMP and diphosphate. This chain is Uracil phosphoribosyltransferase, found in Oleidesulfovibrio alaskensis (strain ATCC BAA-1058 / DSM 17464 / G20) (Desulfovibrio alaskensis).